Consider the following 1378-residue polypeptide: Disease resistance protein RRS1 (1378 aa).

The 142-residue stretch at 5-146 folds into the TIR domain; sequence EKDEEFVCIS…EIVRDVYETH (142 aa). The NB-ARC domain maps to 170–421; sequence IGIRCVGIWG…LLEGCGFFPH (252 aa). Residue 179–186 participates in ATP binding; the sequence is GMPGIGKT. LRR repeat units lie at residues 498–522, 535–553, 554–575, 577–598, 621–646, 665–688, 742–766, 768–793, and 831–854; these read SEEI…AFKN, NPEV…HSLP, NELR…NFDP, HLVE…TKNL, AENL…RLLR, PPNI…TVKP, LPNM…SIQG, PRFL…SLEI, and PRNL…PLSL. The Nuclear localization signal signature appears at 988–1005; the sequence is RNFHCWAPGKVVPKVRKD. A DNA-binding region (WRKY) is located at residues 1204–1272; it reads IPAIDEGDLW…YLSEHNHPRP (69 aa). The segment at 1300-1321 is disordered; that stretch reads RVFQNKDEPNQPHLPSSSTPPR.

In terms of assembly, interacts with PopP2, a R.solanacearum type III effector.

It is found in the nucleus. Its subcellular location is the cytoplasm. Transcription factor. Interacts specifically with the W box (5'-(T)TGAC[CT]-3'), a frequently occurring elicitor-responsive cis-acting element. Also acts as a disease resistance protein involved in resistance to fungal and bacterial pathogens, including R.solanacearum, P.syringae pv. tomato and C.higginsianum. RRS1 mediated resistance depends on salicylic acid and NDR1 (AC O48915). This Arabidopsis thaliana (Mouse-ear cress) protein is Disease resistance protein RRS1.